Consider the following 313-residue polypeptide: N-acetyl-gamma-glutamyl-phosphate reductase (313 aa).

The active site involves C117.

It belongs to the NAGSA dehydrogenase family. Type 2 subfamily.

The protein resides in the cytoplasm. It carries out the reaction N-acetyl-L-glutamate 5-semialdehyde + phosphate + NADP(+) = N-acetyl-L-glutamyl 5-phosphate + NADPH + H(+). The protein operates within amino-acid biosynthesis; L-arginine biosynthesis; N(2)-acetyl-L-ornithine from L-glutamate: step 3/4. Functionally, catalyzes the NADPH-dependent reduction of N-acetyl-5-glutamyl phosphate to yield N-acetyl-L-glutamate 5-semialdehyde. The protein is N-acetyl-gamma-glutamyl-phosphate reductase of Burkholderia orbicola (strain MC0-3).